A 992-amino-acid chain; its full sequence is Vacuolar membrane protease (992 aa).

The Cytoplasmic portion of the chain corresponds to 1-24; it reads MSPAMANPRVRKFNPIAFTPLPVT. Residues 25–45 traverse the membrane as a helical segment; the sequence is FITTIVYLAVLILVLVTYLVV. Over 46–390 the chain is Vacuolar; that stretch reads PPAPTLEMSP…SAFAVFRLHT (345 aa). N-linked (GlcNAc...) asparagine glycans are attached at residues asparagine 59, asparagine 115, and asparagine 118. Zn(2+) is bound by residues histidine 174 and aspartate 186. Glutamate 220 functions as the Proton acceptor in the catalytic mechanism. Glutamate 221 lines the Zn(2+) pocket. An N-linked (GlcNAc...) asparagine glycan is attached at asparagine 237. The Zn(2+) site is built by glutamate 246 and histidine 319. Residues 391-411 traverse the membrane as a helical segment; it reads LFALSVTLLVIGPLVLFITSI. Residues 412-446 are Cytoplasmic-facing; that stretch reads ALSKTDRMYLFSMSKSLGGASETVSLRGLRGLFRT. Residues 447-467 form a helical membrane-spanning segment; sequence PIILTVTTVIPIGLAYLLEKI. The Vacuolar segment spans residues 468–474; that stretch reads NPYIVHS. The helical transmembrane segment at 475–495 threads the bilayer; sequence SQFAVWSMMLSVWIFVAWFLA. The Cytoplasmic segment spans residues 496 to 508; it reads RVADFFRPSALHR. A helical membrane pass occupies residues 509 to 529; the sequence is AYSYTWIFIVTWIMLVISTVY. Residues 530–533 lie on the Vacuolar side of the membrane; it reads ANQK. A helical membrane pass occupies residues 534–554; sequence GIAAGYFTFFYFAAVFLATWV. Residues 555-671 are Cytoplasmic-facing; sequence SYLELFSLPR…WSWTLPRWTW (117 aa). A disordered region spans residues 579–620; that stretch reads RSSSLSSRLLTPSADELPSDIGPNGAENVGDPDETDPTESTS. Residues 672-692 traverse the membrane as a helical segment; sequence ILQLLLLAPIVIILVGQVGLL. Residues 693 to 708 are Vacuolar-facing; the sequence is LTTAMSQIGSDGVSTF. The chain crosses the membrane as a helical span at residues 709 to 729; that stretch reads IVYLACALFSTLLFAPLLPFI. The Cytoplasmic portion of the chain corresponds to 730 to 736; that stretch reads HRFTYHV. The helical transmembrane segment at 737–757 threads the bilayer; that stretch reads PTFLLLIFIGTLIYNLVAFPF. The Vacuolar segment spans residues 758–992; sequence SPANRLKIFF…VEASHDFIIQ (235 aa). Asparagine 805, asparagine 846, and asparagine 954 each carry an N-linked (GlcNAc...) asparagine glycan.

Belongs to the peptidase M28 family. Requires Zn(2+) as cofactor.

The protein localises to the vacuole membrane. May be involved in vacuolar sorting and osmoregulation. This Paracoccidioides brasiliensis (strain Pb03) protein is Vacuolar membrane protease.